A 227-amino-acid polypeptide reads, in one-letter code: Peptidyl-tRNA hydrolase (227 aa).

Y14 is a binding site for tRNA. H19 functions as the Proton acceptor in the catalytic mechanism. F64, N66, and N112 together coordinate tRNA. Positions 182-227 (RIALLTQPPKPPKPPKPPKDGAKETAGKGTEAETAKPPGPAAGRTG) are disordered. Residues 198–215 (PPKDGAKETAGKGTEAET) show a composition bias toward basic and acidic residues.

This sequence belongs to the PTH family. In terms of assembly, monomer.

It is found in the cytoplasm. It carries out the reaction an N-acyl-L-alpha-aminoacyl-tRNA + H2O = an N-acyl-L-amino acid + a tRNA + H(+). Hydrolyzes ribosome-free peptidyl-tRNAs (with 1 or more amino acids incorporated), which drop off the ribosome during protein synthesis, or as a result of ribosome stalling. In terms of biological role, catalyzes the release of premature peptidyl moieties from peptidyl-tRNA molecules trapped in stalled 50S ribosomal subunits, and thus maintains levels of free tRNAs and 50S ribosomes. This Rhodospirillum centenum (strain ATCC 51521 / SW) protein is Peptidyl-tRNA hydrolase.